Reading from the N-terminus, the 269-residue chain is MNTIESITADLHGLGVRPGDLIMVHASLKAVGPVEGGAASVVSALRAAVGSAGTLMGYASWDRSPYEETLNGARMDEELRRRWPPFDLATSGTYPGFGLLNRFLLEAPDARRSAHPDASMVAVGPLAATLTEPHRLGQALGEGSPLERFVGHGGKVLLLGAPLDSVTVLHYAEAIAPIPNKRRVTYEMPMLGPDGRVRWELAEDFDSNGILDCFAVDGKPDAVETIAKAYVELGRHREGIVGRAPSYLFEAQDIVSFGVTYLEQHFGAP.

It belongs to the antibiotic N-acetyltransferase family.

It carries out the reaction a 2-deoxystreptamine antibiotic + acetyl-CoA = an N(3)-acetyl-2-deoxystreptamine antibiotic + CoA + H(+). Resistance to antibiotics containing the 2-deoxy-streptamine ring including gentamicin, kanamycin, tobramycin, neomycin and apramycin. This chain is Aminoglycoside N(3)-acetyltransferase III (aac3-Vb), found in Serratia marcescens.